Here is a 110-residue protein sequence, read N- to C-terminus: Multidrug transporter EmrE (110 aa).

The next 4 helical transmembrane spans lie at 4 to 21 (YIYLGGAILAEVIGTTLM), 34 to 52 (VGTIICYCASFWLLAQTLA), 58 to 80 (IAYAIWSGVGIVLISLLSWGFFG), and 87 to 104 (AIIGMMLICAGVLIINLL).

This sequence belongs to the drug/metabolite transporter (DMT) superfamily. Small multidrug resistance (SMR) (TC 2.A.7.1) family. In terms of assembly, homodimer. Forms an antiparallel dimeric structure. Also forms dimers of homodimers.

The protein localises to the cell inner membrane. Its activity is regulated as follows. Substrate identity influences both the ground-state and transition-state energies for the conformational exchange process, emphasizing the coupling between substrate binding and transport. In terms of biological role, multidrug efflux protein that confers resistance to a wide range of toxic compounds, including ethidium, methyl viologen, acriflavine, tetraphenylphosphonium (TPP(+)), benzalkonium, propidium, dequalinium and the aminoglycoside antibiotics streptomycin and tobramycin. Can also transport the osmoprotectants betaine and choline. The drug efflux is coupled to an influx of protons. Can couple antiport of a drug to either one or two protons, performing both electrogenic and electroneutral transport of a single substrate. Simultaneously binds and cotransports proton and drug. The sequence is that of Multidrug transporter EmrE (emrE) from Escherichia coli (strain K12).